The following is a 186-amino-acid chain: Superoxide dismutase [Cu-Zn] (186 aa).

A signal peptide spans 1 to 22 (MNMKTLLALAVSAVCSVSVAQA). Positions 79, 81, and 104 each coordinate Cu cation. A disulfide bridge links Cys86 with Cys182. 4 residues coordinate Zn(2+): His104, His113, His122, and Asp125. His160 lines the Cu cation pocket.

The protein belongs to the Cu-Zn superoxide dismutase family. Homodimer. Cu cation is required as a cofactor. It depends on Zn(2+) as a cofactor.

The protein localises to the periplasm. The catalysed reaction is 2 superoxide + 2 H(+) = H2O2 + O2. Functionally, destroys radicals which are normally produced within the cells and which are toxic to biological systems. This Neisseria meningitidis serogroup A / serotype 4A (strain DSM 15465 / Z2491) protein is Superoxide dismutase [Cu-Zn] (sodC).